A 137-amino-acid polypeptide reads, in one-letter code: Putative pumilio homolog 25 (137 aa).

Pumilio repeat units follow at residues 70 to 105 (EFDS…LPHS) and 108 to 137 (SVLV…TRLA).

It localises to the cytoplasm. In terms of biological role, sequence-specific RNA-binding protein that regulates translation and mRNA stability by binding the 3'-UTR of target mRNAs. This is Putative pumilio homolog 25 (APUM25) from Arabidopsis thaliana (Mouse-ear cress).